Here is a 142-residue protein sequence, read N- to C-terminus: Fusaric acid resistance protein FusB (142 aa).

The interval 73–142 (AAPCSRKAST…ASCSPAIRPR (70 aa)) is disordered. The span at 81–142 (STGSPARSSG…ASCSPAIRPR (62 aa)) shows a compositional bias: low complexity.

Involved in the resistance (detoxification) of the fungal toxin fusaric acid. The protein is Fusaric acid resistance protein FusB (fusB) of Burkholderia cepacia (Pseudomonas cepacia).